Consider the following 203-residue polypeptide: Protein-L-isoaspartate O-methyltransferase (203 aa).

Ser-50 is a catalytic residue.

It belongs to the methyltransferase superfamily. L-isoaspartyl/D-aspartyl protein methyltransferase family.

It localises to the cytoplasm. The enzyme catalyses [protein]-L-isoaspartate + S-adenosyl-L-methionine = [protein]-L-isoaspartate alpha-methyl ester + S-adenosyl-L-homocysteine. In terms of biological role, catalyzes the methyl esterification of L-isoaspartyl residues in peptides and proteins that result from spontaneous decomposition of normal L-aspartyl and L-asparaginyl residues. It plays a role in the repair and/or degradation of damaged proteins. In Methanococcoides burtonii (strain DSM 6242 / NBRC 107633 / OCM 468 / ACE-M), this protein is Protein-L-isoaspartate O-methyltransferase.